We begin with the raw amino-acid sequence, 545 residues long: Autoimmune regulator (545 aa).

Residues methionine 1 to aspartate 105 enclose the HSR domain. 2 short sequence motifs (LXXLL motif) span residues leucine 7–leucine 11 and leucine 63–leucine 67. Disordered stretches follow at residues proline 101–glycine 178 and serine 234–glutamine 290. The segment covering proline 116–leucine 128 has biased composition (pro residues). A compositionally biased stretch (low complexity) spans alanine 140 to alanine 152. Positions isoleucine 181–proline 280 constitute an SAND domain. Interaction with histone H3 not methylated at 'Lys-4' regions lie at residues asparagine 295 to glutamate 298, aspartate 304 to aspartate 312, and proline 331 to tryptophan 335. Residues glutamate 296–alanine 343 form a PHD-type 1 zinc finger. The segment at valine 348–glycine 382 is disordered. Residues glutamine 358–proline 368 show a composition bias toward pro residues. The LXXLL motif 3 motif lies at leucine 414–leucine 418. Residues cysteine 434–cysteine 475 form a PHD-type 2 zinc finger. A disordered region spans residues alanine 489–glutamate 508. Residues leucine 516 to leucine 520 carry the LXXLL motif 4 motif.

Homodimer and homotetramer. Interacts with CREBBP. Interacts preferentially with histone H3 that is not methylated at 'Lys-4'. Binds with lower affinity to histone H3 that is monomethylated at 'Lys-4'. Trimethylation of histone H3 at 'Lys-4' or phosphorylation at 'Thr-3' abolish the interaction. Binds with lower affinity to histone H3 that is acetylated at 'Lys-4', or that is acetylated at 'Lys-9' or trimethylated at 'Lys-9'. Binds histone H3 that is dimethylated at 'Arg-2' with very low affinity. Post-translationally, phosphorylated. Phosphorylation could trigger oligomerization. Widely expressed. Expressed at higher level in thymus (medullary epithelial cells and monocyte-dendritic cells), pancreas, adrenal cortex and testis. Expressed at lower level in the spleen, fetal liver and lymph nodes. In secondary lymphoid organs, expressed in a discrete population of bone marrow-derived toleregenic antigen presenting cells (APCs) called extrathymic AIRE expressing cells (eTAC)(at protein level). Isoform 2 and isoform 3 seem to be less frequently expressed than isoform 1, if at all.

It is found in the nucleus. The protein localises to the cytoplasm. Transcription factor playing an essential role to promote self-tolerance in the thymus by regulating the expression of a wide array of self-antigens that have the commonality of being tissue-restricted in their expression pattern in the periphery, called tissue restricted antigens (TRA). Binds to G-doublets in an A/T-rich environment; the preferred motif is a tandem repeat of 5'-ATTGGTTA-3' combined with a 5'-TTATTA-3' box. Binds to nucleosomes. Binds to chromatin and interacts selectively with histone H3 that is not methylated at 'Lys-4', not phosphorylated at 'Thr-3' and not methylated at 'Arg-2'. Functions as a sensor of histone H3 modifications that are important for the epigenetic regulation of gene expression. Mainly expressed by medullary thymic epithelial cells (mTECs), induces the expression of thousands of tissue-restricted proteins, which are presented on major histocompatibility complex class I (MHC-I) and MHC-II molecules to developing T-cells percolating through the thymic medulla. Also induces self-tolerance through other mechanisms such as the regulation of the mTEC differentiation program. Controls the medullary accumulation of thymic dendritic cells and the development of regulatory T-cell through the regulation of XCL1 expression. Regulates the production of CCR4 and CCR7 ligands in medullary thymic epithelial cells and alters the coordinated maturation and migration of thymocytes. In thimic B-cells, allows the presentation of licensing-dependent endogenous self-anitgen for negative selection. In secondary lymphoid organs, induces functional inactivation of CD4(+) T-cells. Expressed by a distinct bone marrow-derived population, induces self-tolerance through a mechanism that does not require regulatory T-cells and is resitant to innate inflammatory stimuli. This chain is Autoimmune regulator (AIRE), found in Homo sapiens (Human).